Here is a 208-residue protein sequence, read N- to C-terminus: MSNEFDYLFKLLLIGDSSVGKSCFLLRFADDSYVDSYISTIGVDFKIRTVEVEGKTVKLQIWDTAGQERFRTITSSYYRGAHGIIIVYDITDMESFNNVKQWLDEIDRYANDSVRKLLVGNKCDLAENRAVDTSVAQAYAQEVGIPFLETSAKESINVEEAFLAMSAAIKKSKAGSQAALERKPSNVVQMKGRPIQQEQQKSSRCCST.

Residues 15 to 23, 33 to 40, 63 to 67, 121 to 124, and 151 to 153 contribute to the GTP site; these read GDSSVGKSC, YVDSYIST, DTAGQ, NKCD, and SAK. An Effector region motif is present at residues 37–45; sequence YISTIGVDF. The interval 189 to 208 is disordered; the sequence is QMKGRPIQQEQQKSSRCCST. Over residues 196 to 208 the composition is skewed to polar residues; sequence QQEQQKSSRCCST. S-geranylgeranyl cysteine attachment occurs at residues Cys205 and Cys206.

This sequence belongs to the small GTPase superfamily. Rab family. Low levels in coleoptiles.

It is found in the cell membrane. In terms of biological role, protein transport. Probably involved in vesicular traffic. The chain is GTP-binding protein YPTM1 (YPTM1) from Zea mays (Maize).